The chain runs to 498 residues: MEDKAQYVFALLGILATLYFVRWSTDPLRHIPAIGPSAPIVSYLSAYRYCRNAQSILQEGYHKYKVFRVSLVDRWVVVVSGADMNEELRKVPDTHVSFQEAADDLIQLKYTIAPDVNEHPIHTPVIRGPLTRNLGALFPDVVDEINVAFPELMPPAAKRGDWVAVSVRDTMGRIVSRASNRIFVGLPLCRNPDYLKTVVEFAFSVAKSRTIINAAPAVFRPIVGHFLPWAKRAVRNAGVHVKPLIRLRVSKMQDAGDDQTDKSCDYLMWLIEEAQKTKQNLDIVVQGILVSNFAAIHTSSNSITHSLLNLAAYPQHVQPLREEIEGIIKEYGWTKEAIGKMWKLDSFMRESQRLSGISGISVMRKVLQDITLSDGTYLPKGTLVVAAAFATHTDERYYENPEVFEPFRFYDMRTENDALRKQYVNTSREFITFGHGKHACPGRFFAVNELKAMMAYIILHYDVKLEEGVSRPENVWIWHNISPASTKVLFRERQSKVQ.

A helical transmembrane segment spans residues 7–24; that stretch reads YVFALLGILATLYFVRWS. An N-linked (GlcNAc...) asparagine glycan is attached at N425. C440 contributes to the heme binding site.

This sequence belongs to the cytochrome P450 family. It depends on heme as a cofactor.

Its subcellular location is the membrane. It functions in the pathway secondary metabolite biosynthesis. In terms of biological role, cytochrome P450 monooxygenase that is able to use dehydroabietic acid and testosterone as substrates for oxidation, suggesting that the natural substrate(s) may be structurally related to steroid compounds. The protein is Cytochrome P450 monooxygenase 110 of Postia placenta (strain ATCC 44394 / Madison 698-R) (Brown rot fungus).